The sequence spans 856 residues: DNA mismatch repair protein MutS (856 aa).

Residue 618 to 625 participates in ATP binding; the sequence is GPNMGGKS.

This sequence belongs to the DNA mismatch repair MutS family.

In terms of biological role, this protein is involved in the repair of mismatches in DNA. It is possible that it carries out the mismatch recognition step. This protein has a weak ATPase activity. The sequence is that of DNA mismatch repair protein MutS from Shewanella baltica (strain OS223).